The following is a 303-amino-acid chain: Probable porphobilinogen deaminase (303 aa).

Cys-240 carries the S-(dipyrrolylmethanemethyl)cysteine modification.

This sequence belongs to the HMBS family. It depends on dipyrromethane as a cofactor.

The enzyme catalyses 4 porphobilinogen + H2O = hydroxymethylbilane + 4 NH4(+). Its pathway is porphyrin-containing compound metabolism; protoporphyrin-IX biosynthesis; coproporphyrinogen-III from 5-aminolevulinate: step 2/4. Functionally, tetrapolymerization of the monopyrrole PBG into the hydroxymethylbilane pre-uroporphyrinogen in several discrete steps. This Hyperthermus butylicus (strain DSM 5456 / JCM 9403 / PLM1-5) protein is Probable porphobilinogen deaminase.